The primary structure comprises 650 residues: DNA mismatch repair protein MutL (650 aa).

2 disordered regions span residues 358 to 392 (EASQ…QPLV) and 408 to 448 (QPRP…QSAA). Over residues 367–384 (TPQPRPALTPGHPDPPPQ) the composition is skewed to pro residues. Residues 430-444 (PYAPIAAAPVPASEP) are compositionally biased toward low complexity.

This sequence belongs to the DNA mismatch repair MutL/HexB family.

Its function is as follows. This protein is involved in the repair of mismatches in DNA. It is required for dam-dependent methyl-directed DNA mismatch repair. May act as a 'molecular matchmaker', a protein that promotes the formation of a stable complex between two or more DNA-binding proteins in an ATP-dependent manner without itself being part of a final effector complex. The protein is DNA mismatch repair protein MutL of Geobacter sp. (strain M21).